The primary structure comprises 789 residues: Aryl hydrocarbon receptor nuclear translocator (789 aa).

Residues 1-14 show a composition bias toward polar residues; sequence MAATTANPEMTSDV. Residues 1–97 are disordered; sequence MAATTANPEM…RLARENHSEI (97 aa). Alanine 2 bears the N-acetylalanine mark. Residues 26 to 35 show a composition bias toward gly residues; sequence SGPGIQGGGA. Lysine 58 is covalently cross-linked (Glycyl lysine isopeptide (Lys-Gly) (interchain with G-Cter in SUMO2)). A compositionally biased stretch (basic and acidic residues) spans 60-97; it reads LRCDDDQMSNDKERFARSDDEQSSADKERLARENHSEI. Serine 77 carries the post-translational modification Phosphoserine. Positions 88–128 are DNA-binding; that stretch reads RLARENHSEIERRRRNKMTAYITELSDMVPTCSALARKPDK. A bHLH domain is found at 89 to 142; it reads LARENHSEIERRRRNKMTAYITELSDMVPTCSALARKPDKLTILRMAVSHMKSL. Positions 112–168 are required for heterodimer formation with HIF1A; sequence LSDMVPTCSALARKPDKLTILRMAVSHMKSLRGTGNTSTDGSYKPSFLTDQELKHLI. Residues 112–264 form a required for heterodimer formation with EPAS1 region; sequence LSDMVPTCSA…MCMGSRRSFI (153 aa). PAS domains are found at residues 161–235 and 349–419; these read DQEL…LTGR and PNCT…VKLK. The interval 167 to 171 is mediates the transcription activity and dimerization of the AHR:ARNT complex; it reads LILEA. Residues 424-467 form the PAC domain; it reads SVMFRFRSKNQEWLWMRTSSFTFQNPYSDEIEYIICTNTNVKNS. Residues 465–481 show a composition bias toward polar residues; sequence KNSSQEPRPTLSNTIQR. 2 disordered regions span residues 465–492 and 672–789; these read KNSS…NLPL and TPSS…PFSE. Low complexity predominate over residues 672-696; the sequence is TPSSFSSMSLPGAPTASPGAAAYPS. Residues 708–719 are compositionally biased toward polar residues; it reads TGQTAGQFQTRT. Composition is skewed to low complexity over residues 723–733 and 743–756; these read VGVWPQWQGQQ and QHVQ…PGQP.

As to quaternary structure, monomer. Homodimer only upon binding to a DNA. Efficient DNA binding requires dimerization with another bHLH protein. Interacts with TACC3. Interacts with HIF1A, EPAS1, NPAS1 and NPAS3; forms a heterodimer that binds core DNA sequence 5'-TACGTG-3' within the hypoxia response element (HRE) of target gene promoters. Forms a heterodimer with AHRR, as well as with other bHLH proteins. Interacts with NOCA7. Interacts with TACC3. Interacts with AHR; the heterodimer ARNT:AHR binds to core DNA sequence 5'-TGCGTG-3' within the dioxin response element (DRE) of target gene promoters and activates their transcription. Interacts with SIM1 and NPAS4.

It is found in the nucleus. Functionally, required for activity of the AHR. Upon ligand binding, AHR translocates into the nucleus, where it heterodimerizes with ARNT and induces transcription by binding to xenobiotic response elements (XRE). Not required for the ligand-binding subunit to translocate from the cytosol to the nucleus after ligand binding. The complex initiates transcription of genes involved in the regulation of a variety of biological processes, including angiogenesis, hematopoiesis, drug and lipid metabolism, cell motility and immune modulation. The heterodimer binds to core DNA sequence 5'-TACGTG-3' within the hypoxia response element (HRE) of target gene promoters and functions as a transcriptional regulator of the adaptive response to hypoxia. The heterodimer ARNT:AHR binds to core DNA sequence 5'-TGCGTG-3' within the dioxin response element (DRE) of target gene promoters and activates their transcription. The protein is Aryl hydrocarbon receptor nuclear translocator of Homo sapiens (Human).